The sequence spans 686 residues: Methionine--tRNA ligase (686 aa).

The 'HIGH' region motif lies at 15 to 25 (PYANGPIHLGH). Zn(2+) contacts are provided by Cys146, Cys149, Cys159, and Cys162. The 'KMSKS' region signature appears at 332-336 (KMSKS). Lys335 lines the ATP pocket. Residues 585-686 (TFAKTDLRVA…DGAKPGQRIM (102 aa)) enclose the tRNA-binding domain.

Belongs to the class-I aminoacyl-tRNA synthetase family. MetG type 1 subfamily. In terms of assembly, homodimer. Requires Zn(2+) as cofactor.

The protein localises to the cytoplasm. It catalyses the reaction tRNA(Met) + L-methionine + ATP = L-methionyl-tRNA(Met) + AMP + diphosphate. Functionally, is required not only for elongation of protein synthesis but also for the initiation of all mRNA translation through initiator tRNA(fMet) aminoacylation. The sequence is that of Methionine--tRNA ligase from Psychromonas ingrahamii (strain DSM 17664 / CCUG 51855 / 37).